Reading from the N-terminus, the 390-residue chain is MGERKGVNKWYPPDFDPAKHGSINGYYKTHPLRERARKLSQGILIIRFEMPYNIWCDGCKNHIGMGVRYNAEKKKVGNYYTTPIYRFRMKCHLCVNYIEMQTDPATCDYVIVSGAQRKEERWDMAENEQILTTERNEKEKLETDAMYKLDHGGKDKEKLRAAIPSLNELQEHQSGWKDDFQLNSALRRKFRTEKKVIAEEEEKDNAVRLRTGLSIPLVPEREEDKKLASLLTFQSPDSYEDKKQWKRQEISSRSWFNSPSSAAGGAAGSLLQKLGQQGRGAAVAKALSSSTSTLPILVRRKSESSKSETNNTMSTILPVDTHPAAKDTDATDLPSIVNNINVSINTDINSCTTDACKASSSSEEENSIDSCATGKSLVADYSDSDSGSEV.

Positions 354 to 390 (DACKASSSSEEENSIDSCATGKSLVADYSDSDSGSEV) are disordered.

Belongs to the CWC16 family.

Its subcellular location is the nucleus. In terms of biological role, may be involved in mRNA splicing. This chain is Probable splicing factor YJU2B (yju2b), found in Danio rerio (Zebrafish).